The chain runs to 289 residues: Probable acetolactate synthase small subunit (289 aa).

Position 34 is a phosphoserine (Ser-34). Residues Val-72–Met-149 enclose the ACT domain.

This sequence belongs to the acetolactate synthase small subunit family.

Its subcellular location is the cytoplasm. Its pathway is amino-acid biosynthesis; L-isoleucine biosynthesis; L-isoleucine from 2-oxobutanoate: step 1/4. The protein operates within amino-acid biosynthesis; L-valine biosynthesis; L-valine from pyruvate: step 1/4. Its function is as follows. Stimulates activity of the acetolactate synthase catalytic subunit ilv1. This is Probable acetolactate synthase small subunit from Schizosaccharomyces pombe (strain 972 / ATCC 24843) (Fission yeast).